Here is a 404-residue protein sequence, read N- to C-terminus: Cysteine desulfurase IscS (404 aa).

Pyridoxal 5'-phosphate contacts are provided by residues 75-76 (AT), N155, Q183, and 203-205 (SAH). K206 carries the N6-(pyridoxal phosphate)lysine modification. T243 is a binding site for pyridoxal 5'-phosphate. C328 functions as the Cysteine persulfide intermediate in the catalytic mechanism. Residue C328 participates in [2Fe-2S] cluster binding.

The protein belongs to the class-V pyridoxal-phosphate-dependent aminotransferase family. NifS/IscS subfamily. As to quaternary structure, homodimer. Forms a heterotetramer with IscU, interacts with other sulfur acceptors. Pyridoxal 5'-phosphate serves as cofactor.

It localises to the cytoplasm. It catalyses the reaction (sulfur carrier)-H + L-cysteine = (sulfur carrier)-SH + L-alanine. The protein operates within cofactor biosynthesis; iron-sulfur cluster biosynthesis. Functionally, master enzyme that delivers sulfur to a number of partners involved in Fe-S cluster assembly, tRNA modification or cofactor biosynthesis. Catalyzes the removal of elemental sulfur atoms from cysteine to produce alanine. Functions as a sulfur delivery protein for Fe-S cluster synthesis onto IscU, an Fe-S scaffold assembly protein, as well as other S acceptor proteins. The protein is Cysteine desulfurase IscS of Pseudomonas putida (strain ATCC 700007 / DSM 6899 / JCM 31910 / BCRC 17059 / LMG 24140 / F1).